The sequence spans 155 residues: Small ribosomal subunit protein uS7 (155 aa).

It belongs to the universal ribosomal protein uS7 family. In terms of assembly, part of the 30S ribosomal subunit. Contacts proteins S9 and S11.

In terms of biological role, one of the primary rRNA binding proteins, it binds directly to 16S rRNA where it nucleates assembly of the head domain of the 30S subunit. Is located at the subunit interface close to the decoding center, probably blocks exit of the E-site tRNA. In Corynebacterium glutamicum (strain R), this protein is Small ribosomal subunit protein uS7.